Consider the following 283-residue polypeptide: Glutamate racemase (283 aa).

Substrate is bound by residues 28-29 and 60-61; these read DS and YG. Cys-92 acts as the Proton donor/acceptor in catalysis. Substrate is bound at residue 93–94; the sequence is NT. Catalysis depends on Cys-204, which acts as the Proton donor/acceptor. Residue 205–206 participates in substrate binding; sequence TH.

Belongs to the aspartate/glutamate racemases family.

The catalysed reaction is L-glutamate = D-glutamate. The protein operates within cell wall biogenesis; peptidoglycan biosynthesis. Its function is as follows. Provides the (R)-glutamate required for cell wall biosynthesis. In Salmonella enteritidis PT4 (strain P125109), this protein is Glutamate racemase.